The chain runs to 340 residues: MLEVIAKIREEALARVAAATSSEELEALRVRYLGKKGELTRVLRGMGKLPPEERPRVGQMANKVREELEGALKEHRENLSRREQAERLRAEALDVTLPGRPVTRGNRHPLYQILNEIKAVFIGLGFDVAEGPEVESDYYNFEALNLPKEHPARDMQDSFYITEDVLLRTHTSPVQVRVMEARHPQLPIRIIAPGKVYRRDDDATHSPLFHQVEGLLVDRRVTFGDLKGTLMAFLKQMFGEQVRVRFRPSYFPFTEPSAEVDMSCVMCGGSGCRVCSHTGWLEILGCGMVHPKVLSMSGYDPEEVSGFAFGLGVERVAMLKYGIDDLRLFYENDLRFLRQF.

Mg(2+) is bound at residue Glu255.

The protein belongs to the class-II aminoacyl-tRNA synthetase family. Phe-tRNA synthetase alpha subunit type 1 subfamily. As to quaternary structure, tetramer of two alpha and two beta subunits. Mg(2+) serves as cofactor.

Its subcellular location is the cytoplasm. It carries out the reaction tRNA(Phe) + L-phenylalanine + ATP = L-phenylalanyl-tRNA(Phe) + AMP + diphosphate + H(+). The chain is Phenylalanine--tRNA ligase alpha subunit from Moorella thermoacetica (strain ATCC 39073 / JCM 9320).